A 254-amino-acid polypeptide reads, in one-letter code: HTH-type transcriptional repressor DasR (254 aa).

An HTH gntR-type domain is found at 17–87 (RTARVPKYYR…QGKGTFVAKP (71 aa)). The H-T-H motif DNA-binding region spans 47 to 66 (ERTLAAEFDTSRTTVRQALQ).

The protein resides in the cytoplasm. Its activity is regulated as follows. Binding to the target genes is abolished by GlcN6P, a central molecule in N-acetylglucosamine metabolism. In terms of biological role, global regulator that is part of the nutrient-sensing system. In the absence of glucosamine 6-P (GlcN6P), represses the phosphotransferase system (PTS) specific for the uptake of N-acetylglucosamine (PTSNag), and genes involved in the metabolism of chitin, as well as several genes involved in development, thereby linking carbon availability to morphogenesis. Also regulates the expression of the ABC transporters DasABC and NgcEFG, which are involved in N,N'-diacetylchitobiose ((GlcNAc)2) uptake. Binds to the DNA consensus sequence 5'-ACTGGTCTAGACCACT-3'. This chain is HTH-type transcriptional repressor DasR (dasR), found in Streptomyces coelicolor (strain ATCC BAA-471 / A3(2) / M145).